The following is an 87-amino-acid chain: Acyl-CoA-binding protein (87 aa).

An N-acetylserine modification is found at serine 2. An ACB domain is found at serine 2 to isoleucine 87. Lysine 8 bears the N6-acetyllysine; alternate mark. Lysine 8 carries the post-translational modification N6-succinyllysine; alternate. Lysine 14 is a binding site for an acyl-CoA. Position 17 is an N6-succinyllysine (lysine 17). An N6-acetyllysine modification is found at lysine 19. Phosphotyrosine is present on tyrosine 29. Residues tyrosine 29–lysine 33, lysine 51, lysine 55, and tyrosine 74 each bind an acyl-CoA. Lysine 51 carries the post-translational modification N6-acetyllysine. The residue at position 55 (lysine 55) is an N6-acetyllysine; alternate. At lysine 55 the chain carries N6-succinyllysine; alternate. N6-(2-hydroxyisobutyryl)lysine; alternate is present on lysine 55. Position 55 is an N6-malonyllysine; alternate (lysine 55). N6-acetyllysine; alternate is present on lysine 77. Lysine 77 bears the N6-succinyllysine; alternate mark.

Belongs to the ACBP family. In terms of assembly, monomer.

It localises to the endoplasmic reticulum. Its subcellular location is the golgi apparatus. Functionally, binds medium- and long-chain acyl-CoA esters with very high affinity and may function as an intracellular carrier of acyl-CoA esters. It is also able to displace diazepam from the benzodiazepine (BZD) recognition site located on the GABA type A receptor. It is therefore possible that this protein also acts as a neuropeptide to modulate the action of the GABA receptor. The sequence is that of Acyl-CoA-binding protein (DBI) from Oryctolagus cuniculus (Rabbit).